We begin with the raw amino-acid sequence, 367 residues long: Histidinol-phosphate aminotransferase (367 aa).

Residue Lys-226 is modified to N6-(pyridoxal phosphate)lysine.

Belongs to the class-II pyridoxal-phosphate-dependent aminotransferase family. Histidinol-phosphate aminotransferase subfamily. Homodimer. It depends on pyridoxal 5'-phosphate as a cofactor.

It carries out the reaction L-histidinol phosphate + 2-oxoglutarate = 3-(imidazol-4-yl)-2-oxopropyl phosphate + L-glutamate. It functions in the pathway amino-acid biosynthesis; L-histidine biosynthesis; L-histidine from 5-phospho-alpha-D-ribose 1-diphosphate: step 7/9. This Wolinella succinogenes (strain ATCC 29543 / DSM 1740 / CCUG 13145 / JCM 31913 / LMG 7466 / NCTC 11488 / FDC 602W) (Vibrio succinogenes) protein is Histidinol-phosphate aminotransferase.